The sequence spans 59 residues: MAGQIKVTLKKSGIGRKEYFTKVLKGLGLTKLHKTVVLTDTPEIRGMIRKVSHMVVVED.

This sequence belongs to the universal ribosomal protein uL30 family. In terms of assembly, part of the 50S ribosomal subunit.

In Syntrophotalea carbinolica (strain DSM 2380 / NBRC 103641 / GraBd1) (Pelobacter carbinolicus), this protein is Large ribosomal subunit protein uL30.